Reading from the N-terminus, the 752-residue chain is Multifunctional tryptophan biosynthesis protein (752 aa).

The Glutamine amidotransferase type-1 domain maps to 3–202 (FTLLIDNYDS…IQMKGGKWGG (200 aa)). 58–60 (GPG) is an L-glutamine binding site. Cys86 functions as the Nucleophile; for GATase activity in the catalytic mechanism. 136–137 (SL) serves as a coordination point for L-glutamine. Active-site for GATase activity residues include His176 and Glu178. The tract at residues 231-495 (ILNRIHAQRL…DTKAFLRSLI (265 aa)) is indole-3-glycerol phosphate synthase. The interval 509 to 752 (LVKICGIRST…VEAFVKAVRG (244 aa)) is N-(5'-phosphoribosyl)anthranilate isomerase.

The enzyme catalyses N-(5-phospho-beta-D-ribosyl)anthranilate = 1-(2-carboxyphenylamino)-1-deoxy-D-ribulose 5-phosphate. It catalyses the reaction 1-(2-carboxyphenylamino)-1-deoxy-D-ribulose 5-phosphate + H(+) = (1S,2R)-1-C-(indol-3-yl)glycerol 3-phosphate + CO2 + H2O. It carries out the reaction chorismate + L-glutamine = anthranilate + pyruvate + L-glutamate + H(+). Its pathway is amino-acid biosynthesis; L-tryptophan biosynthesis; L-tryptophan from chorismate: step 1/5. It functions in the pathway amino-acid biosynthesis; L-tryptophan biosynthesis; L-tryptophan from chorismate: step 3/5. The protein operates within amino-acid biosynthesis; L-tryptophan biosynthesis; L-tryptophan from chorismate: step 4/5. Trifunctional enzyme bearing the Gln amidotransferase (GATase) domain of anthranilate synthase, indole-glycerolphosphate synthase, and phosphoribosylanthranilate isomerase activities. This is Multifunctional tryptophan biosynthesis protein (TRP1) from Cryptococcus neoformans var. neoformans serotype D (strain JEC21 / ATCC MYA-565) (Filobasidiella neoformans).